The following is a 386-amino-acid chain: Lipoyl synthase, mitochondrial (386 aa).

A disordered region spans residues 1-48 (MHGRRHLAASLTRALTQAPSRSISSTPSLLQTLDPSVPSPSPPPAAEP). The segment covering 13–34 (RALTQAPSRSISSTPSLLQTLD) has biased composition (polar residues). Residues 37–46 (VPSPSPPPAA) are compositionally biased toward pro residues. 7 residues coordinate [4Fe-4S] cluster: Cys-113, Cys-118, Cys-124, Cys-144, Cys-148, Cys-151, and Ser-360. The region spanning 129-349 (ETGTATATIM…RALGVEMGFR (221 aa)) is the Radical SAM core domain.

Belongs to the radical SAM superfamily. Lipoyl synthase family. It depends on [4Fe-4S] cluster as a cofactor.

Its subcellular location is the mitochondrion. It catalyses the reaction [[Fe-S] cluster scaffold protein carrying a second [4Fe-4S](2+) cluster] + N(6)-octanoyl-L-lysyl-[protein] + 2 oxidized [2Fe-2S]-[ferredoxin] + 2 S-adenosyl-L-methionine + 4 H(+) = [[Fe-S] cluster scaffold protein] + N(6)-[(R)-dihydrolipoyl]-L-lysyl-[protein] + 4 Fe(3+) + 2 hydrogen sulfide + 2 5'-deoxyadenosine + 2 L-methionine + 2 reduced [2Fe-2S]-[ferredoxin]. Its pathway is protein modification; protein lipoylation via endogenous pathway; protein N(6)-(lipoyl)lysine from octanoyl-[acyl-carrier-protein]: step 2/2. Functionally, catalyzes the radical-mediated insertion of two sulfur atoms into the C-6 and C-8 positions of the octanoyl moiety bound to the lipoyl domains of lipoate-dependent enzymes, thereby converting the octanoylated domains into lipoylated derivatives. This Sorghum bicolor (Sorghum) protein is Lipoyl synthase, mitochondrial.